The sequence spans 218 residues: Probable transaldolase (218 aa).

The Schiff-base intermediate with substrate role is filled by Lys83.

Belongs to the transaldolase family. Type 3B subfamily.

The protein localises to the cytoplasm. It carries out the reaction D-sedoheptulose 7-phosphate + D-glyceraldehyde 3-phosphate = D-erythrose 4-phosphate + beta-D-fructose 6-phosphate. Its pathway is carbohydrate degradation; pentose phosphate pathway; D-glyceraldehyde 3-phosphate and beta-D-fructose 6-phosphate from D-ribose 5-phosphate and D-xylulose 5-phosphate (non-oxidative stage): step 2/3. In terms of biological role, transaldolase is important for the balance of metabolites in the pentose-phosphate pathway. This Thermotoga petrophila (strain ATCC BAA-488 / DSM 13995 / JCM 10881 / RKU-1) protein is Probable transaldolase.